Consider the following 885-residue polypeptide: Chromatin structure-remodeling complex protein RSC3 (885 aa).

A DNA-binding region (zn(2)-C6 fungal-type) is located at residues 14–42 (CVQCRKRKIGCDRVKPICGNCMKHNKMDC). A phosphoserine mark is found at Ser-95 and Ser-236.

As to quaternary structure, forms a heteromer with RSC30. Interacts with LDB7 and NPL6. Component of the two forms of the RSC complex composed of at least either RSC1 or RSC2, and ARP7, ARP9, LDB7, NPL6, RSC3, RSC30, RSC4, RSC58, RSC6, RSC8, RSC9, SFH1, STH1, HTL1 and probably RTT102. The complexes interact with histone and histone variant components of centromeric chromatin. Component of a fungal-specific module (HTL1-LDB7-NPL6-RSC3-RSC30) within the RSC complex.

Its subcellular location is the nucleus. Functionally, component of the chromatin structure-remodeling complex (RSC), which is involved in transcription regulation and nucleosome positioning. RSC is responsible for the transfer of a histone octamer from a nucleosome core particle to naked DNA. The reaction requires ATP and involves an activated RSC-nucleosome intermediate. Remodeling reaction also involves DNA translocation, DNA twist and conformational change. As a reconfigurer of centromeric and flanking nucleosomes, RSC complex is required both for proper kinetochore function in chromosome segregation and, via a PKC1-dependent signaling pathway, for organization of the cellular cytoskeleton. This subunit is required for transcription of ribosomal protein genes and genes involved in the integrity of the cell wall, and also for proper metaphase progression. Together with HTL1, LDB7, NPL6, RSC30 components, defines a fungal-specific module within the RSC complex that plays a role in many cellular functions including the maintenance of cell wall integrity. The protein is Chromatin structure-remodeling complex protein RSC3 (RSC3) of Saccharomyces cerevisiae (strain ATCC 204508 / S288c) (Baker's yeast).